We begin with the raw amino-acid sequence, 221 residues long: Putative NAD(P)H nitroreductase YfkO (221 aa).

Residues 15-17 and 73-75 each bind FMN; these read RHA and QKQ. Residue 157–162 coordinates NAD(+); it reads AAAQIG. Residues 169–170 and Arg-211 contribute to the FMN site; that span reads EG.

Belongs to the nitroreductase family. Monomer. It depends on FMN as a cofactor.

The polypeptide is Putative NAD(P)H nitroreductase YfkO (yfkO) (Bacillus subtilis (strain 168)).